A 113-amino-acid chain; its full sequence is Ribonuclease P protein component (113 aa).

This sequence belongs to the RnpA family. Consists of a catalytic RNA component (M1 or rnpB) and a protein subunit.

It carries out the reaction Endonucleolytic cleavage of RNA, removing 5'-extranucleotides from tRNA precursor.. RNaseP catalyzes the removal of the 5'-leader sequence from pre-tRNA to produce the mature 5'-terminus. It can also cleave other RNA substrates such as 4.5S RNA. The protein component plays an auxiliary but essential role in vivo by binding to the 5'-leader sequence and broadening the substrate specificity of the ribozyme. The polypeptide is Ribonuclease P protein component (Geotalea uraniireducens (strain Rf4) (Geobacter uraniireducens)).